The primary structure comprises 249 residues: Caffeoyl-CoA O-methyltransferase (249 aa).

Lys-21 is a substrate binding site. Residues Thr-63, Glu-85, 87–88 (GV), Ser-93, Asp-111, and Ala-140 each bind S-adenosyl-L-methionine. Residue Asp-162 coordinates substrate. Residue Asp-162 coordinates a divalent metal cation. Asp-164 contacts S-adenosyl-L-methionine. A divalent metal cation contacts are provided by Asp-188 and Asn-189. Asn-193 is a binding site for substrate.

This sequence belongs to the class I-like SAM-binding methyltransferase superfamily. Cation-dependent O-methyltransferase family. CCoAMT subfamily. As to quaternary structure, homodimer. It depends on a divalent metal cation as a cofactor.

It catalyses the reaction (E)-caffeoyl-CoA + S-adenosyl-L-methionine = (E)-feruloyl-CoA + S-adenosyl-L-homocysteine + H(+). The protein operates within aromatic compound metabolism; phenylpropanoid biosynthesis. Functionally, methylates caffeoyl-CoA to feruloyl-CoA and 5-hydroxyferuloyl-CoA to sinapoyl-CoA. Plays a role in the synthesis of feruloylated polysaccharides. Involved in the reinforcement of the plant cell wall. Also involved in the responding to wounding or pathogen challenge by the increased formation of cell wall-bound ferulic acid polymers. This Eucalyptus gunnii (Cider gum) protein is Caffeoyl-CoA O-methyltransferase.